Here is an 820-residue protein sequence, read N- to C-terminus: Probable beta-glucosidase ARB_05654 (820 aa).

Positions 1 to 18 are cleaved as a signal peptide; the sequence is MLFRWCPLVALAIASGTA. N62 and N276 each carry an N-linked (GlcNAc...) asparagine glycan. D304 is a catalytic residue. N339, N346, N465, N547, N566, N588, and N811 each carry an N-linked (GlcNAc...) asparagine glycan.

This sequence belongs to the glycosyl hydrolase 3 family.

Its subcellular location is the secreted. The catalysed reaction is Hydrolysis of terminal, non-reducing beta-D-glucosyl residues with release of beta-D-glucose.. Its pathway is glycan metabolism; cellulose degradation. Its function is as follows. Beta-glucosidases are one of a number of cellulolytic enzymes involved in the degradation of cellulosic biomass. Catalyzes the last step releasing glucose from the inhibitory cellobiose. The sequence is that of Probable beta-glucosidase ARB_05654 from Arthroderma benhamiae (strain ATCC MYA-4681 / CBS 112371) (Trichophyton mentagrophytes).